A 1439-amino-acid chain; its full sequence is Microtubule organization protein AKNA (1439 aa).

2 stretches are compositionally biased toward basic and acidic residues: residues 1–10 (MASSETEIRW) and 25–35 (AWAEDKRDVDR). The interval 1–394 (MASSETEIRW…NRKPQAPARP (394 aa)) is disordered. Ser52 carries the phosphoserine modification. Over residues 71-83 (WDPHPQPDGHQDS) the composition is skewed to basic and acidic residues. Positions 89–99 (SGEEAEAEDVD) are enriched in acidic residues. The span at 263–275 (QDSSAPPAQSPQH) shows a compositional bias: polar residues. Positions 276–285 (ATDRWRRETT) are enriched in basic and acidic residues. Phosphoserine is present on residues Ser316, Ser499, and Ser534. 2 disordered regions span residues 507-562 (SAEW…SAEQ) and 659-682 (IDQT…PALP). The segment covering 533-544 (LSPSSLTSMPTL) has biased composition (low complexity). A phosphoserine mark is found at Ser767 and Ser770. The tract at residues 771–804 (LPEAMRMEEEEEGEEEEEEEGGGDSLEVDGVAAT) is PEST. Disordered regions lie at residues 775–942 (MRME…QTPE) and 977–1005 (IPRR…LRQR). Positions 778-792 (EEEEEGEEEEEEEGG) are enriched in acidic residues. Residue Ser848 is modified to Phosphoserine. A compositionally biased stretch (pro residues) spans 865 to 875 (PPGPGVPPHPP). Composition is skewed to polar residues over residues 879 to 891 (SAAS…TSLE), 929 to 940 (SETSRVSPLTQT), and 983 to 999 (EPST…SSPS). Ser886 carries the phosphoserine modification. Positions 911–932 (HLEETWMASPETDSGFVGSETS) are PEST. A phosphoserine mark is found at Ser997 and Ser1010. The disordered stretch occupies residues 1095-1165 (LHQPLQGSPT…RARSSSVPRE (71 aa)). A DNA-binding region (a.T hook) is located at residues 1115–1123 (RTRGRPADS). A compositionally biased stretch (basic and acidic residues) spans 1135–1147 (STERLPGEPRGEE). A phosphoserine mark is found at Ser1172 and Ser1173. The tract at residues 1180–1211 (LPLFSEKSKTTKDSPQAARDGKRGVGSAGWPD) is disordered. Ser1228 bears the Phosphoserine mark. Positions 1252–1329 (AGGAVTGDPL…RPPPGLWYLA (78 aa)) are disordered. Positions 1303–1317 (SSTPSPKQRSKQAGS) are enriched in polar residues. 3 positions are modified to phosphoserine: Ser1377, Ser1387, and Ser1424.

This sequence belongs to the AKNA family. In terms of assembly, interacts with DCTN1. Interacts with MAPRE1/EB1. Interacts with ODF2. Interacts with CAMSAP3. Post-translationally, phosphorylated; phosphorylation regulates dissociation from and reassembly at the centrosome. Predominantly expressed by lymphoid tissues. Highly expressed in the spleen, lymph nodes and peripheral blood leukocytes, expressed at lower level in the thymus. Mainly expressed by germinal center B-lymphocytes, a stage in which receptor and ligand interactions are crucial for B-lymphocyte maturation. Expressed by B- and T-lymphocytes, Natural killer cells and CD1a(+)CD14(-) but not CD1a(-)CD14(+) dendritic cells. Weakly or not expressed in fetal liver and in adult bone marrow.

The protein resides in the cytoplasm. It is found in the cytoskeleton. Its subcellular location is the microtubule organizing center. The protein localises to the centrosome. It localises to the centriole. The protein resides in the nucleus. Its function is as follows. Centrosomal protein that plays a key role in cell delamination by regulating microtubule organization. Required for the delamination and retention of neural stem cells from the subventricular zone during neurogenesis. Also regulates the epithelial-to-mesenchymal transition in other epithelial cells. Acts by increasing centrosomal microtubule nucleation and recruiting nucleation factors and minus-end stabilizers, thereby destabilizing microtubules at the adherens junctions and mediating constriction of the apical endfoot. In addition, may also act as a transcription factor that specifically activates the expression of the CD40 receptor and its ligand CD40L/CD154, two cell surface molecules on lymphocytes that are critical for antigen-dependent-B-cell development. Binds to A/T-rich promoters. It is unclear how it can both act as a microtubule organizer and as a transcription factor; additional evidences are required to reconcile these two apparently contradictory functions. The polypeptide is Microtubule organization protein AKNA (Homo sapiens (Human)).